Consider the following 625-residue polypeptide: Cytochrome c oxidase subunit 1 (625 aa).

A helical transmembrane segment spans residues 23–43 (IAIMYLIAGTLFFVKAGVMAL). Histidine 69 is a binding site for Fe(II)-heme a. 6 consecutive transmembrane segments (helical) span residues 72–92 (IMLFLAATPLLFAFMNYVIPL), 99–119 (VAFPFVNALGFWIFFFGGLLL), 151–171 (FYVLGLQVSGIGTLISAINFL), 195–215 (FISSTLILFAFTPLAAGLALL), 240–260 (IFWIFGHPEVYILVLPAFGII), and 272–292 (LFGYTAMVFATMIIAFLGFMV). Residues histidine 246 and tyrosine 250 each coordinate Cu cation. The 1'-histidyl-3'-tyrosine (His-Tyr) cross-link spans 246 to 250 (HPEVY). Cu cation-binding residues include histidine 295 and histidine 296. The next 2 membrane-spanning stretches (helical) occupy residues 309 to 329 (IFAVATMTIAVPTGIKIFNWL) and 343 to 363 (MLFASSFVPTFVLGGVTGVML). Heme a3 is bound at residue histidine 381. Transmembrane regions (helical) follow at residues 382–402 (FHYIIVGGIVLSLFAGLFYWY), 417–437 (LFFWVFYIGFHLTFFVQHLLG), 460–480 (ISTIGTFFMSAGVILLVINVI), 551–571 (SILPFIMSIGLFFAGFGLIML), and 577–597 (IINPWIVAIGGLALTFGCMFV). Histidine 383 contacts Fe(II)-heme a.

The protein belongs to the heme-copper respiratory oxidase family.

It is found in the cell membrane. It carries out the reaction 4 Fe(II)-[cytochrome c] + O2 + 8 H(+)(in) = 4 Fe(III)-[cytochrome c] + 2 H2O + 4 H(+)(out). It functions in the pathway energy metabolism; oxidative phosphorylation. Cytochrome c oxidase is the component of the respiratory chain that catalyzes the reduction of oxygen to water. Subunits 1-3 form the functional core of the enzyme complex. CO I is the catalytic subunit of the enzyme. Electrons originating in cytochrome c are transferred via the copper A center of subunit 2 and heme A of subunit 1 to the bimetallic center formed by heme A3 and copper B. In Alkalihalophilus pseudofirmus (strain ATCC BAA-2126 / JCM 17055 / OF4) (Bacillus pseudofirmus), this protein is Cytochrome c oxidase subunit 1 (ctaD).